The primary structure comprises 120 residues: Immunoglobulin kappa variable 2-29 (120 aa).

An N-terminal signal peptide occupies residues 1 to 20 (MRLPAQLLGLLMLWIPGSSA). Residues 21–43 (DIVMTQTPLSLSVTPGQPASISC) form a framework-1 region. Residues 21–120 (DIVMTQTPLS…YYCMQGIHLP (100 aa)) form the Ig-like domain. Cysteine 43 and cysteine 113 form a disulfide bridge. A complementarity-determining-1 region spans residues 44-59 (KSSQSLLHSDGKTYLY). A framework-2 region spans residues 60 to 74 (WYLQKPGQSPQLLIY). A complementarity-determining-2 region spans residues 75 to 81 (EVSSRFS). A framework-3 region spans residues 82-113 (GVPDRFSGSGSGTDFTLKISRVEAEDVGVYYC). The tract at residues 114–120 (MQGIHLP) is complementarity-determining-3.

As to quaternary structure, immunoglobulins are composed of two identical heavy chains and two identical light chains; disulfide-linked.

The protein resides in the secreted. Its subcellular location is the cell membrane. Its function is as follows. V region of the variable domain of immunoglobulin light chains that participates in the antigen recognition. Immunoglobulins, also known as antibodies, are membrane-bound or secreted glycoproteins produced by B lymphocytes. In the recognition phase of humoral immunity, the membrane-bound immunoglobulins serve as receptors which, upon binding of a specific antigen, trigger the clonal expansion and differentiation of B lymphocytes into immunoglobulins-secreting plasma cells. Secreted immunoglobulins mediate the effector phase of humoral immunity, which results in the elimination of bound antigens. The antigen binding site is formed by the variable domain of one heavy chain, together with that of its associated light chain. Thus, each immunoglobulin has two antigen binding sites with remarkable affinity for a particular antigen. The variable domains are assembled by a process called V-(D)-J rearrangement and can then be subjected to somatic hypermutations which, after exposure to antigen and selection, allow affinity maturation for a particular antigen. The protein is Immunoglobulin kappa variable 2-29 of Homo sapiens (Human).